An 86-amino-acid polypeptide reads, in one-letter code: Cytochrome c oxidase subunit 6B1 (86 aa).

The residue at position 2 (A2) is an N-acetylalanine. The 47-residue stretch at 27–73 folds into the CHCH domain; the sequence is TRNCWQNYLDFHRCEKAMTAKGGDVSVCEWYRRVYKSLCPISWVSTW. The Cx9C motif motif lies at 30–40; sequence CWQNYLDFHRC. 2 disulfide bridges follow: C30/C65 and C40/C54. Positions 54–65 match the Cx10C motif motif; the sequence is CEWYRRVYKSLC. Residue K62 is modified to N6-acetyllysine.

It belongs to the cytochrome c oxidase subunit 6B family. In terms of assembly, component of the cytochrome c oxidase (complex IV, CIV), a multisubunit enzyme composed of 14 subunits. The complex is composed of a catalytic core of 3 subunits MT-CO1, MT-CO2 and MT-CO3, encoded in the mitochondrial DNA, and 11 supernumerary subunits COX4I, COX5A, COX5B, COX6A, COX6B, COX6C, COX7A, COX7B, COX7C, COX8 and NDUFA4, which are encoded in the nuclear genome. The complex exists as a monomer or a dimer and forms supercomplexes (SCs) in the inner mitochondrial membrane with NADH-ubiquinone oxidoreductase (complex I, CI) and ubiquinol-cytochrome c oxidoreductase (cytochrome b-c1 complex, complex III, CIII), resulting in different assemblies (supercomplex SCI(1)III(2)IV(1) and megacomplex MCI(2)III(2)IV(2)).

It localises to the mitochondrion inner membrane. The protein operates within energy metabolism; oxidative phosphorylation. Functionally, component of the cytochrome c oxidase, the last enzyme in the mitochondrial electron transport chain which drives oxidative phosphorylation. The respiratory chain contains 3 multisubunit complexes succinate dehydrogenase (complex II, CII), ubiquinol-cytochrome c oxidoreductase (cytochrome b-c1 complex, complex III, CIII) and cytochrome c oxidase (complex IV, CIV), that cooperate to transfer electrons derived from NADH and succinate to molecular oxygen, creating an electrochemical gradient over the inner membrane that drives transmembrane transport and the ATP synthase. Cytochrome c oxidase is the component of the respiratory chain that catalyzes the reduction of oxygen to water. Electrons originating from reduced cytochrome c in the intermembrane space (IMS) are transferred via the dinuclear copper A center (CU(A)) of subunit 2 and heme A of subunit 1 to the active site in subunit 1, a binuclear center (BNC) formed by heme A3 and copper B (CU(B)). The BNC reduces molecular oxygen to 2 water molecules using 4 electrons from cytochrome c in the IMS and 4 protons from the mitochondrial matrix. In Carlito syrichta (Philippine tarsier), this protein is Cytochrome c oxidase subunit 6B1 (COX6B1).